A 250-amino-acid polypeptide reads, in one-letter code: Probable chemoreceptor glutamine deamidase CheD (250 aa).

Belongs to the CheD family.

The enzyme catalyses L-glutaminyl-[protein] + H2O = L-glutamyl-[protein] + NH4(+). In terms of biological role, probably deamidates glutamine residues to glutamate on methyl-accepting chemotaxis receptors (MCPs), playing an important role in chemotaxis. The sequence is that of Probable chemoreceptor glutamine deamidase CheD from Paraburkholderia xenovorans (strain LB400).